We begin with the raw amino-acid sequence, 117 residues long: Large ribosomal subunit protein bL19 (117 aa).

Belongs to the bacterial ribosomal protein bL19 family.

This protein is located at the 30S-50S ribosomal subunit interface and may play a role in the structure and function of the aminoacyl-tRNA binding site. The sequence is that of Large ribosomal subunit protein bL19 from Micrococcus luteus (strain ATCC 4698 / DSM 20030 / JCM 1464 / CCM 169 / CCUG 5858 / IAM 1056 / NBRC 3333 / NCIMB 9278 / NCTC 2665 / VKM Ac-2230) (Micrococcus lysodeikticus).